Consider the following 201-residue polypeptide: Keratin-associated protein 4-12 (201 aa).

30 tandem repeats follow at residues Cys-5 to Val-9, Cys-20 to Ser-24, Cys-25 to Thr-29, Cys-30 to Thr-34, Cys-35 to Ser-39, Cys-40 to Ser-44, Cys-45 to Gln-49, Cys-50 to Val-54, Cys-55 to Thr-59, Cys-60 to Ser-64, Cys-65 to Thr-69, Cys-70 to Thr-74, Cys-75 to Ser-79, Cys-80 to Ser-84, Cys-85 to Gln-89, Cys-90 to Val-94, Cys-95 to Thr-99, Cys-100 to Ser-104, Cys-105 to Thr-109, Cys-110 to Thr-114, Cys-115 to Ser-119, Cys-120 to Ser-124, Cys-125 to Gln-129, Cys-130 to Val-134, Cys-135 to Thr-139, Cys-140 to Ser-144, Cys-145 to Ser-149, Cys-155 to Ser-159, Cys-160 to Cys-164, and Cys-165 to Pro-169. Residues Cys-5–Pro-169 are 31 X 5 AA repeats of C-C-[GRQVIL]-[SPTR]-[VSTQPC].

The protein belongs to the KRTAP type 4 family. Interacts with hair keratins. Expressed in the hair follicles.

Its function is as follows. In the hair cortex, hair keratin intermediate filaments are embedded in an interfilamentous matrix, consisting of hair keratin-associated proteins (KRTAP), which are essential for the formation of a rigid and resistant hair shaft through their extensive disulfide bond cross-linking with abundant cysteine residues of hair keratins. The matrix proteins include the high-sulfur and high-glycine-tyrosine keratins. The sequence is that of Keratin-associated protein 4-12 (KRTAP4-12) from Homo sapiens (Human).